The sequence spans 218 residues: Adenylate kinase (218 aa).

10–15 contributes to the ATP binding site; the sequence is GAGKGT. Positions 30–59 are NMP; the sequence is STGDMLRAAVKAGTPLGIAAKKIMDEGGLV. Residues Thr31, Arg36, 57–59, 85–88, and Gln92 each bind AMP; these read GLV and GFPR. The segment at 122–159 is LID; it reads GRRVHPASGRTYHVKFNPPKVAGKDDLTGEELIQRDDD. Residues Arg123 and 132-133 contribute to the ATP site; that span reads TY. Arg156 and Arg167 together coordinate AMP. Gly203 contributes to the ATP binding site.

This sequence belongs to the adenylate kinase family. As to quaternary structure, monomer.

It is found in the cytoplasm. It carries out the reaction AMP + ATP = 2 ADP. It functions in the pathway purine metabolism; AMP biosynthesis via salvage pathway; AMP from ADP: step 1/1. Its function is as follows. Catalyzes the reversible transfer of the terminal phosphate group between ATP and AMP. Plays an important role in cellular energy homeostasis and in adenine nucleotide metabolism. The protein is Adenylate kinase of Janthinobacterium sp. (strain Marseille) (Minibacterium massiliensis).